The following is a 305-amino-acid chain: PI-PLC X domain-containing protein 2 (305 aa).

One can recognise a PI-PLC X-box domain in the interval histidine 42 to cysteine 215. Catalysis depends on residues histidine 57 and histidine 132.

As to expression, widely expressed.

It localises to the nucleus. The enzyme catalyses a 1,2-diacyl-sn-glycero-3-phospho-(1D-myo-inositol) + H2O = 1D-myo-inositol 1-phosphate + a 1,2-diacyl-sn-glycerol + H(+). Its function is as follows. Catalyzes the hydrolysis of inositol from phosphatidylinositol (1,2-diacyl-sn-glycero-3-phospho-(1D-myo-inositol), PI). Could also hydrolyze various multi-phosphorylated derivatives of PI, such as phosphatidylinositol-4,5 bisphosphate (PIP2), releasing inositol-1,4,5-trisphosphate (IP3) and the protein kinase C activator diacylglycerol (DAG), therefore mediating cell signaling. This Homo sapiens (Human) protein is PI-PLC X domain-containing protein 2 (PLCXD2).